The chain runs to 520 residues: Amine oxidase [flavin-containing] B (520 aa).

Residue S2 is modified to N-acetylserine. Topologically, residues 2–489 (SNKCDVIVVG…TFLERHLPSV (488 aa)) are cytoplasmic. K52 is subject to N6-acetyllysine. The residue at position 397 (C397) is an S-8alpha-FAD cysteine. The chain crosses the membrane as a helical; Anchor for type IV membrane protein span at residues 490–516 (PGLLKLLGLTTILSATALGFLAHKKGL). Over 517 to 520 (FVRF) the chain is Mitochondrial intermembrane.

This sequence belongs to the flavin monoamine oxidase family. Monomer, homo- or heterodimer (containing two subunits of similar size). Each subunit contains a covalently bound flavin. Enzymatically active as monomer. FAD serves as cofactor.

The protein localises to the mitochondrion outer membrane. It carries out the reaction a secondary aliphatic amine + O2 + H2O = a primary amine + an aldehyde + H2O2. It catalyses the reaction (R)-adrenaline + O2 + H2O = (R)-3,4-dihydroxymandelaldehyde + methylamine + H2O2. The enzyme catalyses a primary methyl amine + O2 + H2O = an aldehyde + H2O2 + NH4(+). The catalysed reaction is dopamine + O2 + H2O = 3,4-dihydroxyphenylacetaldehyde + H2O2 + NH4(+). It carries out the reaction tyramine + O2 + H2O = (4-hydroxyphenyl)acetaldehyde + H2O2 + NH4(+). It catalyses the reaction (R)-noradrenaline + O2 + H2O = (R)-3,4-dihydroxymandelaldehyde + H2O2 + NH4(+). The enzyme catalyses benzylamine + O2 + H2O = benzaldehyde + H2O2 + NH4(+). The catalysed reaction is 2-phenylethylamine + O2 + H2O = 2-phenylacetaldehyde + H2O2 + NH4(+). It carries out the reaction N-acetylputrescine + O2 + H2O = 4-acetamidobutanal + H2O2 + NH4(+). Functionally, catalyzes the oxidative deamination of primary and some secondary amines such as neurotransmitters, and exogenous amines including the tertiary amine, neurotoxin 1-methyl-4-phenyl-1,2,3,6-tetrahydropyridine (MPTP), with concomitant reduction of oxygen to hydrogen peroxide and participates in the metabolism of neuroactive and vasoactive amines in the central nervous system and peripheral tissues. Preferentially degrades benzylamine and phenylethylamine. This is Amine oxidase [flavin-containing] B from Rattus norvegicus (Rat).